The chain runs to 668 residues: Threonine--tRNA ligase (668 aa).

In terms of domain architecture, TGS spans methionine 1–alanine 61. The segment at aspartate 265–proline 564 is catalytic. Zn(2+) contacts are provided by cysteine 358, histidine 409, and histidine 541.

It belongs to the class-II aminoacyl-tRNA synthetase family. As to quaternary structure, homodimer. The cofactor is Zn(2+).

The protein localises to the cytoplasm. The enzyme catalyses tRNA(Thr) + L-threonine + ATP = L-threonyl-tRNA(Thr) + AMP + diphosphate + H(+). Catalyzes the attachment of threonine to tRNA(Thr) in a two-step reaction: L-threonine is first activated by ATP to form Thr-AMP and then transferred to the acceptor end of tRNA(Thr). Also edits incorrectly charged L-seryl-tRNA(Thr). This Nocardioides sp. (strain ATCC BAA-499 / JS614) protein is Threonine--tRNA ligase.